The chain runs to 515 residues: Pre-glycoprotein polyprotein GP complex (515 aa).

Residue glycine 2 is the site of N-myristoyl glycine; by host attachment. Residues 2 to 17 (GQVIGFFQSLPEIINE) lie on the Extracellular side of the membrane. A helical transmembrane segment spans residues 18 to 33 (ALNIALICVALLATIK). At 34–58 (GMVNIWKSGLIQLLFFLTLAGRSCS) the chain is on the cytoplasmic side. Position 57 (cysteine 57) interacts with Zn(2+). At 59-453 (HSFTIGRFHE…QGRTPLSLVD (395 aa)) the chain is on the extracellular side. 4 cysteine pairs are disulfide-bonded: cysteine 87-cysteine 255, cysteine 300-cysteine 313, cysteine 322-cysteine 331, and cysteine 385-cysteine 406. Asparagine 90, asparagine 112, asparagine 127, asparagine 180, and asparagine 248 each carry an N-linked (GlcNAc...) asparagine; by host glycan. Asparagine 386, asparagine 394, and asparagine 416 each carry an N-linked (GlcNAc...) asparagine; by host glycan. The chain crosses the membrane as a helical span at residues 454–474 (LCFWSTLFYISTLFAHLVGFP). Residues 475–515 (THRHLIGEGCPKPHRLTGSGICSCGHYGIPGKPVRWTKMSR) are Cytoplasmic-facing. Zn(2+) is bound by residues histidine 476, histidine 478, cysteine 484, histidine 488, cysteine 496, and cysteine 498.

The protein belongs to the arenaviridae GPC protein family. In terms of assembly, interacts with glycoprotein G2. Part of the GP complex (GP-C) together with glycoprotein G1 and glycoprotein G2. The GP-complex interacts with protein Z, which interacts with ribonucleocapsid; these interactions may induce virion budding. As to quaternary structure, homotrimer; disulfide-linked. In pre-fusion state, G1 homotrimers bind G2 homotrimers via ionic interactions. Part of the GP complex (GP-C) together with glycoprotein G2 and the stable signal peptide. The GP-complex interacts with protein Z, which interacts with ribonucleocapsid; these interactions may induce virion budding. Homotrimer. Interacts with the stable signal peptide. In pre-fusion state, G2 homotrimers bind G1 homotrimers via ionic interactions. Part of the GP complex (GP-C) together with glycoprotein G1 and the stable signal peptide. Acidification in the endosome triggers rearrangements, which ultimately leads to a 6 helix bundle formed by the two heptad repeat domains (HR1 and HR2) in post-fusion state. The GP-complex interacts with protein Z, which interacts with ribonucleocapsid; these interactions may induce virion budding. Specific enzymatic cleavages in vivo yield mature proteins. GP-C polyprotein is cleaved in the endoplasmic reticulum by the host protease MBTPS1. Only cleaved glycoprotein is incorporated into virions. In terms of processing, the SSP remains stably associated with the GP complex following cleavage by signal peptidase and plays crucial roles in the trafficking of GP through the secretory pathway. Post-translationally, myristoylation is necessary for GP2-mediated fusion activity.

Its subcellular location is the virion membrane. It localises to the host endoplasmic reticulum membrane. The protein resides in the host Golgi apparatus membrane. It is found in the host cell membrane. Its function is as follows. Functions as a cleaved signal peptide that is retained as the third component of the GP complex (GP-C). Helps to stabilize the spike complex in its native conformation. The SSP is required for efficient glycoprotein expression, post-translational maturation cleavage of G1 and G2, glycoprotein transport to the cell surface plasma membrane, formation of infectious virus particles, and acid pH-dependent glycoprotein-mediated cell fusion. In terms of biological role, forms the virion spikes together with glycoprotein G2. The glycoprotein spike trimers are connected to the underlying matrix. Mediates virus attachment to host receptor alpha-dystroglycan DAG1. This attachment induces virion internalization predominantly through clathrin- and caveolin-independent endocytosis. Functionally, forms the virion spikes together with glycoprotein G1. The glycoprotein spike trimers are connected to the underlying matrix. Class I viral fusion protein that directs fusion of viral and host endosomal membranes, leading to delivery of the nucleocapsid into the cytoplasm. Membrane fusion is mediated by irreversible conformational changes induced by acidification. This is Pre-glycoprotein polyprotein GP complex from Latino mammarenavirus (isolate Rat/Bolivia/MARU 1924/1965) (LATV).